Consider the following 438-residue polypeptide: GDP-mannose 6-dehydrogenase (438 aa).

6 residues coordinate NAD(+): tyrosine 10, valine 11, aspartate 30, lysine 35, threonine 86, and threonine 124. Residues glutamate 161, lysine 210, asparagine 214, histidine 217, asparagine 225, tyrosine 256, tyrosine 257, arginine 259, phenylalanine 262, and glycine 265 each contribute to the GDP-alpha-D-mannuronate site. Cysteine 268 is a catalytic residue. Lysine 271 is a binding site for NAD(+). GDP-alpha-D-mannuronate is bound at residue lysine 324. Arginine 331 contributes to the NAD(+) binding site.

It belongs to the UDP-glucose/GDP-mannose dehydrogenase family.

It carries out the reaction GDP-alpha-D-mannose + 2 NAD(+) + H2O = GDP-alpha-D-mannuronate + 2 NADH + 3 H(+). It participates in glycan biosynthesis; alginate biosynthesis. Its function is as follows. Catalyzes the oxidation of guanosine diphospho-D-mannose (GDP-D-mannose) to GDP-D-mannuronic acid, a precursor for alginate polymerization. The alginate layer causes a mucoid phenotype and provides a protective barrier against host immune defenses and antibiotics. This Pseudomonas syringae pv. tomato (strain ATCC BAA-871 / DC3000) protein is GDP-mannose 6-dehydrogenase (algD).